The chain runs to 391 residues: Ethanol acetyltransferase 1 (391 aa).

The N-terminal 24 residues, 1–24, are a transit peptide targeting the mitochondrion; the sequence is MFFTKVLNNQVANGLKQLPVHKRV. The AB hydrolase-1 domain maps to 48–154; sequence PIVFVHGIFG…DNSPIEQPHI (107 aa). Catalysis depends on charge relay system residues S121, D145, and H295.

Belongs to the AB hydrolase superfamily.

The protein localises to the mitochondrion. The catalysed reaction is ethanol + acetyl-CoA = ethyl acetate + CoA. It catalyses the reaction acetyl-CoA + H2O = acetate + CoA + H(+). It carries out the reaction ethyl acetate + H2O = ethanol + acetate + H(+). Its activity is regulated as follows. By ethanol. Thioesterase and esterase reactions are highly repressed in the presence of high ethanol concentrations. Its function is as follows. Alcohol acetyltransferase that catalyzes the synthesis of ethyl acetate from ethanol and acetyl-CoA. Can also function as a thioesterase by hydrolyzing acetyl-CoA in the absence of ethanol, as well as esterase hydrolyzing ethyl acetate. In Wickerhamomyces anomalus (strain ATCC 58044 / CBS 1984 / NCYC 433 / NRRL Y-366-8) (Yeast), this protein is Ethanol acetyltransferase 1 (EAT1).